The sequence spans 63 residues: DNA gyrase inhibitor YacG (63 aa).

4 residues coordinate Zn(2+): cysteine 10, cysteine 13, cysteine 29, and cysteine 33.

This sequence belongs to the DNA gyrase inhibitor YacG family. Interacts with GyrB. It depends on Zn(2+) as a cofactor.

Inhibits all the catalytic activities of DNA gyrase by preventing its interaction with DNA. Acts by binding directly to the C-terminal domain of GyrB, which probably disrupts DNA binding by the gyrase. The protein is DNA gyrase inhibitor YacG of Chromobacterium violaceum (strain ATCC 12472 / DSM 30191 / JCM 1249 / CCUG 213 / NBRC 12614 / NCIMB 9131 / NCTC 9757 / MK).